The sequence spans 331 residues: Biotin synthase (331 aa).

One can recognise a Radical SAM core domain in the interval 53-272 (NHVETASLLS…LATARVMMPR (220 aa)). Cysteine 68, cysteine 72, and cysteine 75 together coordinate [4Fe-4S] cluster. Positions 112, 143, 203, and 276 each coordinate [2Fe-2S] cluster.

This sequence belongs to the radical SAM superfamily. Biotin synthase family. Homodimer. [4Fe-4S] cluster serves as cofactor. Requires [2Fe-2S] cluster as cofactor.

The catalysed reaction is (4R,5S)-dethiobiotin + (sulfur carrier)-SH + 2 reduced [2Fe-2S]-[ferredoxin] + 2 S-adenosyl-L-methionine = (sulfur carrier)-H + biotin + 2 5'-deoxyadenosine + 2 L-methionine + 2 oxidized [2Fe-2S]-[ferredoxin]. It functions in the pathway cofactor biosynthesis; biotin biosynthesis; biotin from 7,8-diaminononanoate: step 2/2. Functionally, catalyzes the conversion of dethiobiotin (DTB) to biotin by the insertion of a sulfur atom into dethiobiotin via a radical-based mechanism. This Bradyrhizobium diazoefficiens (strain JCM 10833 / BCRC 13528 / IAM 13628 / NBRC 14792 / USDA 110) protein is Biotin synthase.